The following is a 350-amino-acid chain: UDP-3-O-acylglucosamine N-acyltransferase (350 aa).

Catalysis depends on histidine 257, which acts as the Proton acceptor.

This sequence belongs to the transferase hexapeptide repeat family. LpxD subfamily. Homotrimer.

It carries out the reaction a UDP-3-O-[(3R)-3-hydroxyacyl]-alpha-D-glucosamine + a (3R)-hydroxyacyl-[ACP] = a UDP-2-N,3-O-bis[(3R)-3-hydroxyacyl]-alpha-D-glucosamine + holo-[ACP] + H(+). It participates in bacterial outer membrane biogenesis; LPS lipid A biosynthesis. Catalyzes the N-acylation of UDP-3-O-acylglucosamine using 3-hydroxyacyl-ACP as the acyl donor. Is involved in the biosynthesis of lipid A, a phosphorylated glycolipid that anchors the lipopolysaccharide to the outer membrane of the cell. This Chelativorans sp. (strain BNC1) protein is UDP-3-O-acylglucosamine N-acyltransferase.